The chain runs to 529 residues: Peptide chain release factor 3 (529 aa).

The tr-type G domain maps to 11-280 (NKRRTFAIIS…GLVKWAPAPM (270 aa)). GTP is bound by residues 20 to 27 (SHPDAGKT), 88 to 92 (DTPGH), and 142 to 145 (NKLD).

It belongs to the TRAFAC class translation factor GTPase superfamily. Classic translation factor GTPase family. PrfC subfamily.

Its subcellular location is the cytoplasm. Functionally, increases the formation of ribosomal termination complexes and stimulates activities of RF-1 and RF-2. It binds guanine nucleotides and has strong preference for UGA stop codons. It may interact directly with the ribosome. The stimulation of RF-1 and RF-2 is significantly reduced by GTP and GDP, but not by GMP. The chain is Peptide chain release factor 3 from Proteus mirabilis (strain HI4320).